The sequence spans 300 residues: DNA repair protein RecO (300 aa).

This sequence belongs to the RecO family.

Involved in DNA repair and RecF pathway recombination. In Nostoc punctiforme (strain ATCC 29133 / PCC 73102), this protein is DNA repair protein RecO.